The chain runs to 183 residues: ATP-dependent protease subunit HslV (183 aa).

Residue Thr13 is part of the active site. Residues Gly168, Cys171, and Thr174 each contribute to the Na(+) site.

This sequence belongs to the peptidase T1B family. HslV subfamily. In terms of assembly, a double ring-shaped homohexamer of HslV is capped on each side by a ring-shaped HslU homohexamer. The assembly of the HslU/HslV complex is dependent on binding of ATP.

It localises to the cytoplasm. The enzyme catalyses ATP-dependent cleavage of peptide bonds with broad specificity.. Its activity is regulated as follows. Allosterically activated by HslU binding. Protease subunit of a proteasome-like degradation complex believed to be a general protein degrading machinery. This chain is ATP-dependent protease subunit HslV, found in Stenotrophomonas maltophilia (strain R551-3).